Reading from the N-terminus, the 245-residue chain is Orotidine 5'-phosphate decarboxylase (245 aa).

Substrate is bound by residues D22, K44, 71–80 (DLKFHDIPNT), T131, R192, Q201, G221, and R222. The active-site Proton donor is K73.

It belongs to the OMP decarboxylase family. Type 1 subfamily. In terms of assembly, homodimer.

The enzyme catalyses orotidine 5'-phosphate + H(+) = UMP + CO2. The protein operates within pyrimidine metabolism; UMP biosynthesis via de novo pathway; UMP from orotate: step 2/2. Its function is as follows. Catalyzes the decarboxylation of orotidine 5'-monophosphate (OMP) to uridine 5'-monophosphate (UMP). In Shigella flexneri serotype 5b (strain 8401), this protein is Orotidine 5'-phosphate decarboxylase.